Here is a 506-residue protein sequence, read N- to C-terminus: Maturase K (506 aa).

This sequence belongs to the intron maturase 2 family. MatK subfamily.

It is found in the plastid. The protein localises to the chloroplast. Its function is as follows. Usually encoded in the trnK tRNA gene intron. Probably assists in splicing its own and other chloroplast group II introns. The polypeptide is Maturase K (Melilotus albus (White sweet clover)).